Reading from the N-terminus, the 172-residue chain is S-ribosylhomocysteine lyase (172 aa).

The Fe cation site is built by His-54, His-58, and Cys-128.

It belongs to the LuxS family. Homodimer. The cofactor is Fe cation.

It carries out the reaction S-(5-deoxy-D-ribos-5-yl)-L-homocysteine = (S)-4,5-dihydroxypentane-2,3-dione + L-homocysteine. In terms of biological role, involved in the synthesis of autoinducer 2 (AI-2) which is secreted by bacteria and is used to communicate both the cell density and the metabolic potential of the environment. The regulation of gene expression in response to changes in cell density is called quorum sensing. Catalyzes the transformation of S-ribosylhomocysteine (RHC) to homocysteine (HC) and 4,5-dihydroxy-2,3-pentadione (DPD). The protein is S-ribosylhomocysteine lyase of Vibrio parahaemolyticus serotype O3:K6 (strain RIMD 2210633).